We begin with the raw amino-acid sequence, 153 residues long: Prostaglandin E synthase (153 aa).

At 1 to 13 (MPPPSLAMVSGQA) the chain is on the lumenal side. Residues 14–42 (LPAFLLCSTLLVIKMYAVAVITGQVRLRK) form a helical membrane-spanning segment. Residue arginine 39 coordinates glutathione. Residues 43–61 (KAFANPEDALRHGGLQFHR) lie on the Cytoplasmic side of the membrane. Residues 62 to 91 (DDQDVERCLRAHRNDMETIYPFLFLGLVYS) form a helical membrane-spanning segment. Residue 74–78 (RNDME) coordinates glutathione. The Lumenal portion of the chain corresponds to 92 to 96 (FLGPD). Residues 97–120 (PFVAQMHFLVFFLGRMVHTVAYLG) form a helical membrane-spanning segment. Glutathione-binding residues include histidine 114 and tyrosine 118. Residues 121–124 (KLRA) lie on the Cytoplasmic side of the membrane. A helical membrane pass occupies residues 125–153 (PTRSLAYTVAQLPCASMALQIVWEAARHL). Residue 127–131 (RSLAY) coordinates glutathione.

This sequence belongs to the MAPEG family. As to quaternary structure, homotrimer. It depends on glutathione as a cofactor.

It localises to the membrane. Its subcellular location is the cytoplasm. It is found in the perinuclear region. It carries out the reaction prostaglandin H2 = prostaglandin E2. It catalyses the reaction 2-glyceryl-prostaglandin H2 = 2-glyceryl-prostaglandin E2. The enzyme catalyses prostaglandin G2 = (15S)-15-hydroperoxy-prostaglandin E2. The catalysed reaction is 1-chloro-2,4-dinitrobenzene + glutathione = 2,4-dinitrophenyl-S-glutathione + chloride + H(+). It carries out the reaction (5S)-hydroperoxy-(6E,8Z,11Z,14Z)-eicosatetraenoate + 2 glutathione = (5S)-hydroxy-(6E,8Z,11Z,14Z)-eicosatetraenoate + glutathione disulfide + H2O. It participates in lipid metabolism; prostaglandin biosynthesis. Terminal enzyme of the cyclooxygenase (COX)-2-mediated prostaglandin E2 (PGE2) biosynthetic pathway. Catalyzes the glutathione-dependent oxidoreduction of prostaglandin endoperoxide H2 (PGH2) to prostaglandin E2 (PGE2) in response to inflammatory stimuli. Plays a key role in inflammation response, fever and pain. Also catalyzes the oxidoreduction of endocannabinoids into prostaglandin glycerol esters and PGG2 into 15-hydroperoxy-PGE2. In addition, displays low glutathione transferase and glutathione-dependent peroxidase activities, toward 1-chloro-2,4-dinitrobenzene and 5-hydroperoxyicosatetraenoic acid (5-HPETE), respectively. The polypeptide is Prostaglandin E synthase (PTGES) (Equus caballus (Horse)).